A 564-amino-acid chain; its full sequence is Potassium-transporting ATPase potassium-binding subunit (564 aa).

The next 10 membrane-spanning stretches (helical) occupy residues 4 to 24, 67 to 87, 135 to 155, 179 to 199, 258 to 278, 286 to 306, 382 to 402, 420 to 440, 487 to 507, and 533 to 553; these read YDFA…PWLG, TLAL…VLLL, LGLT…LVVL, LYGL…QGVP, FEVA…GHYV, AILA…LWSE, AGLY…GLMI, LLVA…AIAA, LMIG…ILAL, and GLLL…TLAL.

Belongs to the KdpA family. In terms of assembly, the system is composed of three essential subunits: KdpA, KdpB and KdpC.

It is found in the cell inner membrane. Functionally, part of the high-affinity ATP-driven potassium transport (or Kdp) system, which catalyzes the hydrolysis of ATP coupled with the electrogenic transport of potassium into the cytoplasm. This subunit binds the periplasmic potassium ions and delivers the ions to the membrane domain of KdpB through an intramembrane tunnel. This is Potassium-transporting ATPase potassium-binding subunit from Pseudomonas putida (strain ATCC 47054 / DSM 6125 / CFBP 8728 / NCIMB 11950 / KT2440).